The sequence spans 435 residues: MAHNEPITIDDAGDDFDAVEDNQAINEQYKVWKKNTPFLYDTVITHALTWPSLTCQWLPDITDVPDTDYTSQRLIIGTHTSGQANDHLIIAEVLLPKKGAGISDKALADLYDEEKQEIGSYTASPARIRAIQTINHAGEVNRARYMPQNPELIATKTVTGEVYVFDRTKHESKAPANGECKPDIRLKGQTKEGYGLSWNALKEGHILSASEDTTIGHWDIQGYSKQDPSLQPLRLYTGHSAYVADVEWHPKNENMFGSVSDDGQIMIWDTRSDNTAKASSQVQGHNAEINCISFAPSSEYLFLTGSSDNTIALWDLRKLSTKHHSFEAHTNDVLQLSWSPTSPVHFASASADRRVHIWDLDAIGAEQTPDDAEDGPPELLFVHGGHTSKVCDISWSPSSPWTIASASEDNILQVWEPSRHLRTPYEAEFDEKDLE.

WD repeat units follow at residues 135 to 175 (NHAG…SKAP), 188 to 228 (GQTK…KQDP), 238 to 278 (GHSA…TAKA), 284 to 324 (GHNA…TKHH), and 328 to 368 (AHTN…AEQT). Residues 370–374 (DDAED) form an interaction with the histone H4 N-terminus region. A WD 6 repeat occupies 385 to 425 (GHTSKVCDISWSPSSPWTIASASEDNILQVWEPSRHLRTPY).

It belongs to the WD repeat RBAP46/RBAP48/MSI1 family. In terms of assembly, component of the HAT-B complex composed of at least HAT1 and HAT2. The HAT-B complex binds to histone H4 tail.

The protein localises to the cytoplasm. It is found in the nucleus. Regulatory subunit of the histone acetylase B (HAT-B) complex. The complex acetylates 'Lys-12' of histone H4 which is required for telomeric silencing. The sequence is that of Histone acetyltransferase type B subunit 2 (HAT2) from Cryptococcus neoformans var. neoformans serotype D (strain B-3501A) (Filobasidiella neoformans).